The following is a 117-amino-acid chain: Minor capsid protein p17 (117 aa).

Residue Asn12 is glycosylated (N-linked (GlcNAc...) asparagine; by host). A helical membrane pass occupies residues 39 to 59 (AIILGILILLVIILIVVAIVY). N-linked (GlcNAc...) asparagine; by host glycosylation is found at Asn61 and Asn98. Positions 97 to 117 (KNSTTQQHIPSDEQLAELAHS) are disordered.

This sequence belongs to the asfivirus minor capsid protein p17 family. As to quaternary structure, interacts with the minor capsid protein M1249L and with the hexon capsid protein p72 capsomers; these interactions form a rigid zipper structure that stabilizes the capsomers. Interacts with host STING1.

Its subcellular location is the virion membrane. The protein resides in the host endoplasmic reticulum membrane. In terms of biological role, together with the penton and the other minor capsid proteins (M1249L, p49), forms a complicated network immediately below the outer capsid shell, stabilizing the whole capsid. Three copies of p17 encircle each p72 capsomer in the inner capsid shell, anchoring p72 capsomers on the inner membrane. Required for the assembly of the capsid and icosahedral morphogenesis. Additionally, inhibits the host cGAS-STING pathway through its interaction with STING1 and subsequent interference of the recruitment of downstream components TBK1 and IKBKE. The protein is Minor capsid protein p17 of Ornithodoros (relapsing fever ticks).